Reading from the N-terminus, the 71-residue chain is UPF0346 protein BCQ_2236 (71 aa).

Belongs to the UPF0346 family.

The sequence is that of UPF0346 protein BCQ_2236 from Bacillus cereus (strain Q1).